Consider the following 220-residue polypeptide: Adenylate kinase (220 aa).

Residue Gly10–Thr15 coordinates ATP. The NMP stretch occupies residues Ala30–Ile59. AMP is bound by residues Arg36, Asp57 to Ile59, Gly83 to Arg86, and Gln90. Residues Gly124–Asp161 form an LID region. An ATP-binding site is contributed by Arg125. Zn(2+) is bound by residues Cys128 and Cys131. Val134–Tyr135 serves as a coordination point for ATP. Cys148 and Cys151 together coordinate Zn(2+). AMP is bound by residues Arg158 and Arg169. Gly197 is a binding site for ATP.

This sequence belongs to the adenylate kinase family. In terms of assembly, monomer.

The protein resides in the cytoplasm. The catalysed reaction is AMP + ATP = 2 ADP. It functions in the pathway purine metabolism; AMP biosynthesis via salvage pathway; AMP from ADP: step 1/1. Functionally, catalyzes the reversible transfer of the terminal phosphate group between ATP and AMP. Plays an important role in cellular energy homeostasis and in adenine nucleotide metabolism. This is Adenylate kinase from Pyrococcus abyssi (strain GE5 / Orsay).